Here is a 61-residue protein sequence, read N- to C-terminus: MADYFLTVFDPSGNTLVNEQFEAEHEEAAKTHGEALLKEKELHSHTHRLVNAAGKLILFHR.

This is an uncharacterized protein from Bacillus subtilis (strain 168).